Reading from the N-terminus, the 475-residue chain is tRNA-2-methylthio-N(6)-dimethylallyladenosine synthase (475 aa).

Positions 1–10 (MHETTLKREG) are enriched in basic and acidic residues. The disordered stretch occupies residues 1–25 (MHETTLKREGASTPSNPTPSTHAAG). Over residues 12-23 (STPSNPTPSTHA) the composition is skewed to polar residues. The MTTase N-terminal domain occupies 27-144 (GKIYIRTFGC…LPELIRRRRD (118 aa)). Positions 36, 73, 107, 181, 185, and 188 each coordinate [4Fe-4S] cluster. A Radical SAM core domain is found at 167 to 400 (RVEGATAFVS…QALINEQAAA (234 aa)). One can recognise a TRAM domain in the interval 403–466 (QSMVGTRQRL…TNSLRGRVAG (64 aa)).

Belongs to the methylthiotransferase family. MiaB subfamily. As to quaternary structure, monomer. [4Fe-4S] cluster serves as cofactor.

It is found in the cytoplasm. It carries out the reaction N(6)-dimethylallyladenosine(37) in tRNA + (sulfur carrier)-SH + AH2 + 2 S-adenosyl-L-methionine = 2-methylsulfanyl-N(6)-dimethylallyladenosine(37) in tRNA + (sulfur carrier)-H + 5'-deoxyadenosine + L-methionine + A + S-adenosyl-L-homocysteine + 2 H(+). Functionally, catalyzes the methylthiolation of N6-(dimethylallyl)adenosine (i(6)A), leading to the formation of 2-methylthio-N6-(dimethylallyl)adenosine (ms(2)i(6)A) at position 37 in tRNAs that read codons beginning with uridine. The protein is tRNA-2-methylthio-N(6)-dimethylallyladenosine synthase of Bordetella avium (strain 197N).